A 709-amino-acid chain; its full sequence is Disintegrin and metalloproteinase domain-containing protein 5 (709 aa).

A propeptide spanning residues 1 to 98 (MKTPISSILK…TLSGFIHVIY (98 aa)) is cleaved from the precursor. The Extracellular portion of the chain corresponds to 1–649 (MKTPISSILK…QQNRGIHPKQ (649 aa)). In terms of domain architecture, Peptidase M12B spans 141–334 (RYIKTDIVVD…QDLECLQDLP (194 aa)). 7 disulfide bridges follow: cysteine 247–cysteine 329, cysteine 289–cysteine 314, cysteine 291–cysteine 296, cysteine 406–cysteine 426, cysteine 585–cysteine 597, cysteine 591–cysteine 603, and cysteine 605–cysteine 614. The 89-residue stretch at 346-434 (RRICGNGILE…YCVPDTFARN (89 aa)) folds into the Disintegrin domain. An EGF-like; calcium-binding domain is found at 581–615 (DFQQCNTSRDCNDHGVCNNFNHCHCDKGYNPPYCE). The chain crosses the membrane as a helical span at residues 650–670 (QLQLILYITLPLIMIISAVFI). Over 671-709 (KQSKLSRLCGRERSEGTSCITEDSVSNTKMTTNEGSTLH) the chain is Cytoplasmic. The segment at 690-709 (ITEDSVSNTKMTTNEGSTLH) is disordered.

As to quaternary structure, interacts with TEX101. In terms of tissue distribution, detected in testis.

The protein localises to the membrane. This is a non catalytic metalloprotease-like protein. May play a role in sperm-egg fusion. This chain is Disintegrin and metalloproteinase domain-containing protein 5 (Adam5), found in Rattus norvegicus (Rat).